A 222-amino-acid chain; its full sequence is Eukaryotic translation initiation factor 4E-1 (222 aa).

Basic and acidic residues predominate over residues 1–22 (MVDEVEKPASLEESKTNTREVE). The segment at 1-37 (MVDEVEKPASLEESKTNTREVEEGAEEVIESDDTMSS) is disordered. Over residues 23–33 (EGAEEVIESDD) the composition is skewed to acidic residues. EIF4G-binding stretches follow at residues 47 to 50 (HPLE) and 57 to 93 (FDNPSGKSKQAAWGSSIRPIYTFSTVEDFWSVYNNIH). Residues 65–70 (KQAAWG), Lys-97, and 115–116 (WE) contribute to the mRNA site. An intrachain disulfide couples Cys-120 to Cys-158. An EIF4G-binding region spans residues 141–150 (YTLLAMIGEQ). MRNA-binding positions include 165-170 (RVRQEK) and 210-214 (KKLDR).

Belongs to the eukaryotic initiation factor 4E family. As to quaternary structure, EIF4F is a multi-subunit complex, the composition of which varies with external and internal environmental conditions. It is composed of at least EIF4A, EIF4E and EIF4G. EIF4E is also known to interact with other partners. In higher plants two isoforms of EIF4F have been identified, named isoform EIF4F and isoform EIF(iso)4F. Isoform EIF4F has subunits p220 and p26, whereas isoform EIF(iso)4F has subunits p82 and p28. Post-translationally, according to the redox status, the Cys-120-Cys-158 disulfide bridge may have a role in regulating protein function by affecting its ability to bind capped mRNA. As to expression, expressed ubiquitously in seedlings, roots, leaves, sepals, petals, anthers and dehisced pollen, with highest levels in pollen, maturing anthers and roots. Strongly expressed in susceptible plants but not in resistant ones.

It is found in the nucleus. The protein localises to the cytoplasm. In terms of biological role, component of the protein complex eIF4F, which is involved in the recognition of the mRNA cap, ATP-dependent unwinding of 5'-terminal secondary structure and recruitment of mRNA to the ribosome. Recognizes and binds the 7-methylguanosine-containing mRNA cap during an early step in the initiation of protein synthesis and facilitates ribosome binding by inducing the unwinding of the mRNAs secondary structures. Key component of recessive resistance to potyviruses. Its function is as follows. (Microbial infection) Susceptibility host factor required for viral infection (e.g. potato virus Y (PVY) and pepper mottle virus (PepMoV)) by recruiting viral RNAs to the host ribosomal complex via an interaction with viral genome-linked protein (VPg). The polypeptide is Eukaryotic translation initiation factor 4E-1 (Nicotiana tabacum (Common tobacco)).